The following is a 308-amino-acid chain: Type II restriction enzyme MamI (308 aa).

It carries out the reaction Endonucleolytic cleavage of DNA to give specific double-stranded fragments with terminal 5'-phosphates.. Its function is as follows. A P subtype restriction enzyme that recognizes the double-stranded sequence 5'-GATNNNNATC-3' and cleaves after N-5. The polypeptide is Type II restriction enzyme MamI (Microbacterium ammoniaphilum).